The sequence spans 232 residues: Platelet-activating factor acetylhydrolase IB subunit alpha1 (232 aa).

N-acetylserine is present on Ser-2. A Phosphoserine modification is found at Ser-2. Active-site residues include Ser-47, Asp-192, and His-195.

It belongs to the 'GDSL' lipolytic enzyme family. Platelet-activating factor acetylhydrolase IB beta/gamma subunits subfamily. Forms a catalytic dimer which is either homodimer (alpha1/alpha1 homodimer) or heterodimer with PAFAH1B2 (alpha1/alpha2 heterodimer). Component of the cytosolic (PAF-AH (I)) heterotetrameric enzyme, which is composed of PAFAH1B1 (beta), PAFAH1B2 (alpha2) and PAFAH1B3 (alpha1) subunits. The catalytic activity of the enzyme resides in the alpha1 (PAFAH1B3) and alpha2 (PAFAH1B2) subunits, whereas the beta subunit (PAFAH1B1) has regulatory activity. Trimer formation is not essential for the catalytic activity. Interacts with VLDLR; this interaction may modulate the Reelin pathway.

It localises to the cytoplasm. It carries out the reaction a 1-O-alkyl-2-acetyl-sn-glycero-3-phosphocholine + H2O = a 1-O-alkyl-sn-glycero-3-phosphocholine + acetate + H(+). It catalyses the reaction 1-O-hexadecyl-2-acetyl-sn-glycero-3-phosphocholine + H2O = 1-O-hexadecyl-sn-glycero-3-phosphocholine + acetate + H(+). The catalysed reaction is 1-O-hexadecyl-2-acetyl-sn-glycero-3-phosphate + H2O = 1-O-hexadecyl-sn-glycero-3-phosphate + acetate + H(+). Beta subunit (PAFAH1B1) inhibits the acetylhydrolase activity of the alpha1/alpha1 catalytic homodimer. Its function is as follows. Alpha1 catalytic subunit of the cytosolic type I platelet-activating factor (PAF) acetylhydrolase (PAF-AH (I)) heterotetrameric enzyme that catalyzes the hydrolyze of the acetyl group at the sn-2 position of PAF and its analogs and modulates the action of PAF. The activity and substrate specificity of PAF-AH (I) are affected by its subunit composition. Both alpha1/alpha1 homodimer (PAFAH1B3/PAFAH1B3 homodimer) and alpha1/alpha2 heterodimer(PAFAH1B3/PAFAH1B2 heterodimer) hydrolyze 1-O-alkyl-2-acetyl-sn-glycero-3-phosphoric acid (AAGPA) more efficiently than PAF, but they have little hydrolytic activity towards 1-O-alkyl-2-acetyl-sn-glycero-3-phosphorylethanolamine (AAGPE). Plays an important role during the development of brain. The protein is Platelet-activating factor acetylhydrolase IB subunit alpha1 of Bos taurus (Bovine).